A 203-amino-acid chain; its full sequence is Thymidylate kinase (203 aa).

14-21 (GGEGIGKS) serves as a coordination point for ATP.

It belongs to the thymidylate kinase family.

It catalyses the reaction dTMP + ATP = dTDP + ADP. Its function is as follows. Phosphorylation of dTMP to form dTDP in both de novo and salvage pathways of dTTP synthesis. This chain is Thymidylate kinase, found in Rickettsia conorii (strain ATCC VR-613 / Malish 7).